The primary structure comprises 837 residues: A disintegrin and metalloproteinase with thrombospondin motifs 4 (837 aa).

Positions 1 to 51 (MSQTGSHPGRGLAGRWLWGAQPCLLLPIVPLSWLVWLLLLLLASLLPSARL) are cleaved as a signal peptide. Residues 52–212 (ASPLPREEEI…PSPRPRRAKR (161 aa)) constitute a propeptide that is removed on maturation. A glycan (N-linked (GlcNAc...) asparagine) is linked at N68. Residues 166–191 (EGGTPNSAGGPGAHILRRKSPASGQG) are disordered. Positions 192-199 (PMCNVKAP) match the Cysteine switch motif. C194 is a Zn(2+) binding site. Residues 218 to 428 (RFVETLVVAD…GYGHCLLDKP (211 aa)) enclose the Peptidase M12B domain. Intrachain disulfides connect C293–C345, C322–C327, C339–C423, C377–C407, C449–C472, C460–C482, C467–C501, C495–C506, C532–C569, C536–C574, and C547–C559. H361 contacts Zn(2+). E362 is an active-site residue. 2 residues coordinate Zn(2+): H365 and H371. A Disintegrin domain is found at 437–519 (TFPGKDYDAD…DQLQDFNIPQ (83 aa)). A TSP type-1 domain is found at 520–575 (AGGWGPWGPWGDCSRTCGGGVQFSSRDCTRPVPRNGGKYCEGRRTRFRSCNTEDCP). Residues 686–837 (SKQSGSFRKF…LRRRPWVGRK (152 aa)) form a spacer region.

Interacts with SRPX2. The cofactor is Zn(2+). Post-translationally, the precursor is cleaved by a furin endopeptidase. Glycosylated. Can be O-fucosylated by POFUT2 on a serine or a threonine residue found within the consensus sequence C1-X(2)-(S/T)-C2-G of the TSP type-1 repeat domains where C1 and C2 are the first and second cysteine residue of the repeat, respectively. Fucosylated repeats can then be further glycosylated by the addition of a beta-1,3-glucose residue by the glucosyltransferase, B3GALTL. Fucosylation mediates the efficient secretion of ADAMTS family members. Can also be C-glycosylated with one or two mannose molecules on tryptophan residues within the consensus sequence W-X-X-W of the TPRs, and N-glycosylated. These other glycosylations can also facilitate secretion.

The protein localises to the secreted. It localises to the extracellular space. It is found in the extracellular matrix. The enzyme catalyses Glutamyl endopeptidase. Bonds cleaved include 370-Thr-Glu-Gly-Glu-|-Ala-Arg-Gly-Ser-377 in the interglobular domain of mammalian aggrecan.. Its function is as follows. Cleaves aggrecan, a cartilage proteoglycan, at the '392-Glu-|-Ala-393' site and may be involved in its turnover. Also cleaves COMP. May play an important role in the destruction of aggrecan in arthritic diseases. This is A disintegrin and metalloproteinase with thrombospondin motifs 4 (ADAMTS4) from Pongo abelii (Sumatran orangutan).